The chain runs to 75 residues: Small ribosomal subunit protein bS18c (75 aa).

A compositionally biased stretch (basic residues) spans 1 to 12 (MNKSKRSFRRRL). Residues 1–21 (MNKSKRSFRRRLPPIGSRDQI) form a disordered region.

Belongs to the bacterial ribosomal protein bS18 family. Part of the 30S ribosomal subunit.

Its subcellular location is the plastid. It localises to the chloroplast. This chain is Small ribosomal subunit protein bS18c, found in Cycas taitungensis (Prince sago).